The chain runs to 622 residues: WD repeat-containing protein 48 (622 aa).

The residue at position 28 (tyrosine 28) is a Phosphotyrosine. 8 WD repeats span residues 28–67 (YNRN…QDPY), 73–112 (HHTD…CMST), 115–154 (THKD…ALTA), 166–205 (GNKD…KLMK), 208–247 (GHTD…CIAT), 250–289 (VHDE…IRVL), 292–334 (EEKA…NFRA), and 358–397 (KGGA…GFSS). Lysine 214 is modified (N6-acetyllysine). Lysine 523 bears the N6-acetyllysine mark. Positions 552–573 (LDNESQTTSSSNNEKPGEQEKE) are disordered. The span at 554 to 565 (NESQTTSSSNNE) shows a compositional bias: low complexity. A Phosphothreonine modification is found at threonine 558.

This sequence belongs to the WD repeat WDR48 family. In terms of assembly, interacts with USP46. Interacts with USP1. Interacts with USP12. Component of the USP12-WDR20-WDR48 deubiquitinating complex. Component of the USP12-DMWD-WDR48 deubiquitinating complex. Interacts with PHLPP1. Interacts with RAD51AP1; the interaction is direct and promotes formation of a trimeric complex with RAD51 via RAD51AP1. Interacts with ATAD5; the interaction regulates USP1-mediated PCNA deubiquitination. Interacts with RAD51; the interaction is enhanced under replication stress. Interacts with ITCH; the interaction is more efficient when both USP12 and WDR48/UAF1 are involved and may facilitate recruitment of the USP12 deubiquitinating complex to Notch.

The protein resides in the nucleus. It localises to the cytoplasm. The protein localises to the lysosome. Its subcellular location is the late endosome. Regulator of deubiquitinating complexes, which acts as a strong activator of USP1, USP12 and USP46. Enhances the USP1-mediated deubiquitination of FANCD2; USP1 being almost inactive by itself. Activates deubiquitination by increasing the catalytic turnover without increasing the affinity of deubiquitinating enzymes for the substrate. Also activates deubiquitinating activity of complexes containing USP12. Docks at the distal end of the USP12 fingers domain and induces a cascade of structural changes leading to the activation of the enzyme. Together with RAD51AP1, promotes DNA repair by stimulating RAD51-mediated homologous recombination. Binds single-stranded DNA (ssDNA) and double-stranded DNA (dsDNA). DNA-binding is required both for USP1-mediated deubiquitination of FANCD2 and stimulation of RAD51-mediated homologous recombination: both WDR48/UAF1 and RAD51AP1 have coordinated role in DNA-binding during these processes. Together with ATAD5 and by regulating USP1 activity, has a role in PCNA-mediated translesion synthesis (TLS) by deubiquitinating monoubiquitinated PCNA. Together with ATAD5, has a role in recruiting RAD51 to stalled forks during replication stress. In Macaca fascicularis (Crab-eating macaque), this protein is WD repeat-containing protein 48 (WDR48).